A 380-amino-acid chain; its full sequence is Glucose-1-phosphate adenylyltransferase (380 aa).

Alpha-D-glucose 1-phosphate contacts are provided by residues Gly-164, 179 to 180 (EK), and Ser-190.

This sequence belongs to the bacterial/plant glucose-1-phosphate adenylyltransferase family. In terms of assembly, homotetramer.

It carries out the reaction alpha-D-glucose 1-phosphate + ATP + H(+) = ADP-alpha-D-glucose + diphosphate. It participates in glycan biosynthesis; glycogen biosynthesis. Involved in the biosynthesis of ADP-glucose, a building block required for the elongation reactions to produce glycogen. Catalyzes the reaction between ATP and alpha-D-glucose 1-phosphate (G1P) to produce pyrophosphate and ADP-Glc. In Streptococcus gordonii (strain Challis / ATCC 35105 / BCRC 15272 / CH1 / DL1 / V288), this protein is Glucose-1-phosphate adenylyltransferase.